A 313-amino-acid polypeptide reads, in one-letter code: Olfactory receptor 1J4 (313 aa).

At 1-25 (MKRENQSSVSEFLLLDLPIWPEQQA) the chain is on the extracellular side. The N-linked (GlcNAc...) asparagine glycan is linked to asparagine 5. The chain crosses the membrane as a helical span at residues 26-49 (VFFTLFLGMYLITVLGNLLIILLI). Residues 50–57 (RLDSHLHT) lie on the Cytoplasmic side of the membrane. Residues 58–79 (PMFFFLSHLALTDISLSSVTVP) form a helical membrane-spanning segment. The Extracellular portion of the chain corresponds to 80 to 100 (KMLLSMQTQDQSILYAGCVTQ). Cysteine 97 and cysteine 189 are disulfide-bonded. The helical transmembrane segment at 101-120 (MYFFIFFTDLDNFLLTSMAY) threads the bilayer. Residues 121–139 (DRYVAICHPLRYTTIMKEG) lie on the Cytoplasmic side of the membrane. A helical membrane pass occupies residues 140–158 (LCNLLVTVSWILSCTNALS). At 159–195 (HTLLLAQLSFCADNTIPHFFCDLVALLKLSCSDISLN) the chain is on the extracellular side. A helical transmembrane segment spans residues 196 to 219 (ELVIFTVGQAVITLPLICILISYG). Topologically, residues 220-236 (HIGVTILKAPSTKGIFK) are cytoplasmic. A helical membrane pass occupies residues 237 to 259 (ALSTCGSHLSVVSLYYGTIIGLY). The Extracellular segment spans residues 260 to 272 (FLPSSSASSDKDV). The helical transmembrane segment at 273–292 (IASVMYTVITPLLNPFIYSL) threads the bilayer. At 293–313 (RNRDIKGALERLFNRATVLSQ) the chain is on the cytoplasmic side.

The protein belongs to the G-protein coupled receptor 1 family.

The protein localises to the cell membrane. Odorant receptor. This is Olfactory receptor 1J4 (OR1J4) from Homo sapiens (Human).